The following is a 102-amino-acid chain: Large ribosomal subunit protein mL63 (102 aa).

This sequence belongs to the mitochondrion-specific ribosomal protein mL63 family.

Its subcellular location is the mitochondrion. The polypeptide is Large ribosomal subunit protein mL63 (Mrpl57) (Mus musculus (Mouse)).